A 471-amino-acid polypeptide reads, in one-letter code: Putative multidrug resistance protein MdtD (471 aa).

Topologically, residues 1-11 (MTDLPDSTRWQ) are periplasmic. The helical transmembrane segment at 12–32 (LWIVAFGFFMQSLDTTIVNTA) threads the bilayer. At 33–48 (LPSMAQSLGESPLHMH) the chain is on the cytoplasmic side. The chain crosses the membrane as a helical span at residues 49-69 (MVIVSYVLTVAVMLPASGWLA). Residues 70-76 (DKVGVRN) are Periplasmic-facing. A helical membrane pass occupies residues 77-97 (IFFTAIVLFTLGSLFCALSGT). Residues 98–101 (LNEL) lie on the Cytoplasmic side of the membrane. The helical transmembrane segment at 102–124 (LLARALQGVGGAMMVPVGRLTVM) threads the bilayer. The Periplasmic portion of the chain corresponds to 125 to 137 (KIVPREQYMAAMT). The chain crosses the membrane as a helical span at residues 138 to 158 (FVTLPGQVGPLLGPALGGLLV). Residues 159 to 164 (EYASWH) lie on the Cytoplasmic side of the membrane. Residues 165–185 (WIFLINIPVGIIGAIATLMLM) form a helical membrane-spanning segment. Residues 186-196 (PNYTMQTRRFD) lie on the Periplasmic side of the membrane. A helical membrane pass occupies residues 197-217 (LSGFLLLAVGMAVLTLALDGS). At 218–224 (KGTGLSP) the chain is on the cytoplasmic side. A helical membrane pass occupies residues 225-245 (LTIDGLVAVGVVALVLYLLHA). Topologically, residues 246-262 (RNNNRALFSLKLFRTRT) are periplasmic. The helical transmembrane segment at 263–283 (FSLGLAGSFAGRIGSGMLPFM) threads the bilayer. Residues 284 to 285 (TP) are Cytoplasmic-facing. The helical transmembrane segment at 286-306 (VFLQIGLGFSPFHAGLMMIPM) threads the bilayer. The Periplasmic segment spans residues 307-341 (VLGSMGMKRIVVQVVNRFGYRRVLVATTLGLSLVT). A helical transmembrane segment spans residues 342–362 (LLFMTTALLGWYYVLPFVLFL). The Cytoplasmic segment spans residues 363–395 (QGMVNSTRFSSMNTLTLKDLPDNLASSGNSLLS). The chain crosses the membrane as a helical span at residues 396–416 (MIMQLSMSIGVTIAGLLLGLF). Residues 417–430 (GSQHVSIDSGTTQT) lie on the Periplasmic side of the membrane. The chain crosses the membrane as a helical span at residues 431 to 451 (VFMYTWLSMALIIALPAFIFA). The Cytoplasmic portion of the chain corresponds to 452–471 (RVPNDTHQNVAISRRKRSAQ).

The protein belongs to the major facilitator superfamily. TCR/Tet family.

The protein localises to the cell inner membrane. The protein is Putative multidrug resistance protein MdtD of Escherichia coli (strain SE11).